We begin with the raw amino-acid sequence, 247 residues long: 14-3-3-like protein B (247 aa).

This sequence belongs to the 14-3-3 family.

The protein is 14-3-3-like protein B (GF14B) of Glycine max (Soybean).